Here is a 178-residue protein sequence, read N- to C-terminus: MPAYHSMLMEPDTKLIGNMAMLPIRSQFKGPAPRETKDTDIIDEAIYYFKANVFFKNYEIKNEADRTLIYITLYISECLKKLQKCNSKGQGEKEMYTLGITNFPIPGEPGFPLNAMYVKPSNKQEDEVMRAYLQQLRQETGLRLCDKVFDPQTDKPSKWWTCFVKRQFMNKSLSAPGQ.

It belongs to the ARPC3 family. As to quaternary structure, component of the Arp2/3 complex composed of actr2/arp2, actr3/arp3, arpc1 (arpc1a or arpc1b), arpc2, arpc3, arpc4 and arpc5.

It localises to the cytoplasm. It is found in the cytoskeleton. The protein localises to the cell projection. Its subcellular location is the nucleus. In terms of biological role, component of the Arp2/3 complex, a multiprotein complex that mediates actin polymerization upon stimulation by nucleation-promoting factor (NPF). The Arp2/3 complex mediates the formation of branched actin networks in the cytoplasm, providing the force for cell motility. In addition to its role in the cytoplasmic cytoskeleton, the Arp2/3 complex also promotes actin polymerization in the nucleus, thereby regulating gene transcription and repair of damaged DNA. The Arp2/3 complex promotes homologous recombination (HR) repair in response to DNA damage by promoting nuclear actin polymerization, leading to drive motility of double-strand breaks (DSBs). The protein is Actin-related protein 2/3 complex subunit 3-A (arpc3-a) of Xenopus laevis (African clawed frog).